Reading from the N-terminus, the 342-residue chain is ATPase asna-1 (342 aa).

Residue 26–33 (KGGVGKTT) coordinates ATP. D55 is a catalytic residue. 2 residues coordinate ATP: E243 and N270. Zn(2+) contacts are provided by C285 and C288.

Belongs to the arsA ATPase family. As to quaternary structure, homodimer.

It is found in the cytoplasm. Its subcellular location is the endoplasmic reticulum. Its function is as follows. ATPase required for the post-translational delivery of tail-anchored (TA) proteins to the endoplasmic reticulum. Recognizes and selectively binds the transmembrane domain of TA proteins in the cytosol. This complex then targets to the endoplasmic reticulum by membrane-bound receptors, where the tail-anchored protein is released for insertion. This process is regulated by ATP binding and hydrolysis. ATP binding drives the homodimer towards the closed dimer state, facilitating recognition of newly synthesized TA membrane proteins. ATP hydrolysis is required for insertion. Subsequently, the homodimer reverts towards the open dimer state, lowering its affinity for the membrane-bound receptor, and returning it to the cytosol to initiate a new round of targeting. May be involved in insulin signaling. The sequence is that of ATPase asna-1 from Caenorhabditis elegans.